The chain runs to 100 residues: Ferredoxin-2 (100 aa).

A 2Fe-2S ferredoxin-type domain is found at Tyr4–Ser97. Residues Cys42, Cys47, Cys50, and Cys81 each contribute to the [2Fe-2S] cluster site.

The protein belongs to the 2Fe2S plant-type ferredoxin family. It depends on [2Fe-2S] cluster as a cofactor.

In terms of biological role, ferredoxins are iron-sulfur proteins that transfer electrons in a wide variety of metabolic reactions. The sequence is that of Ferredoxin-2 from Aphanothece sacrum.